The chain runs to 313 residues: HPr kinase/phosphorylase (313 aa).

Residues His-141 and Lys-162 contribute to the active site. Position 156 to 163 (156 to 163 (GKSGIGKS)) interacts with ATP. Ser-163 contacts Mg(2+). Residue Asp-180 is the Proton acceptor; for phosphorylation activity. Proton donor; for dephosphorylation activity of the active site. The important for the catalytic mechanism of both phosphorylation and dephosphorylation stretch occupies residues 203–212 (IEIRGIGIFD). Glu-204 contributes to the Mg(2+) binding site. Arg-247 is an active-site residue. Residues 268 to 273 (PVSAGR) form an important for the catalytic mechanism of dephosphorylation region.

It belongs to the HPrK/P family. As to quaternary structure, homohexamer. The cofactor is Mg(2+).

The enzyme catalyses [HPr protein]-L-serine + ATP = [HPr protein]-O-phospho-L-serine + ADP + H(+). It carries out the reaction [HPr protein]-O-phospho-L-serine + phosphate + H(+) = [HPr protein]-L-serine + diphosphate. Functionally, catalyzes the ATP- as well as the pyrophosphate-dependent phosphorylation of a specific serine residue in HPr, a phosphocarrier protein of the phosphoenolpyruvate-dependent sugar phosphotransferase system (PTS). HprK/P also catalyzes the pyrophosphate-producing, inorganic phosphate-dependent dephosphorylation (phosphorolysis) of seryl-phosphorylated HPr (P-Ser-HPr). The two antagonistic activities of HprK/P are regulated by several intracellular metabolites, which change their concentration in response to the absence or presence of rapidly metabolisable carbon sources (glucose, fructose, etc.) in the growth medium. Therefore, by controlling the phosphorylation state of HPr, HPrK/P is a sensor enzyme that plays a major role in the regulation of carbon metabolism and sugar transport: it mediates carbon catabolite repression (CCR), and regulates PTS-catalyzed carbohydrate uptake and inducer exclusion. This is HPr kinase/phosphorylase from Mycoplasma mycoides subsp. mycoides SC (strain CCUG 32753 / NCTC 10114 / PG1).